The chain runs to 520 residues: GMP synthase [glutamine-hydrolyzing] (520 aa).

A Glutamine amidotransferase type-1 domain is found at 3–200 (AIAIIDFGSQ…FLDIANCKRD (198 aa)). C84 functions as the Nucleophile in the catalytic mechanism. Active-site residues include H175 and E177. Positions 201–386 (WTMKSFIEEQ…IGLSDEIIFQ (186 aa)) constitute a GMPS ATP-PPase domain. 228-234 (SGGVDSS) lines the ATP pocket.

As to quaternary structure, homodimer.

The enzyme catalyses XMP + L-glutamine + ATP + H2O = GMP + L-glutamate + AMP + diphosphate + 2 H(+). The protein operates within purine metabolism; GMP biosynthesis; GMP from XMP (L-Gln route): step 1/1. Its function is as follows. Catalyzes the synthesis of GMP from XMP. The sequence is that of GMP synthase [glutamine-hydrolyzing] from Wolbachia pipientis wMel.